We begin with the raw amino-acid sequence, 824 residues long: RelA-associated inhibitor (824 aa).

N-acetylmethionine is present on M1. Disordered stretches follow at residues 48–87 (SLWS…SPQK) and 99–271 (RSES…YERL). A phosphoserine mark is found at S84, S100, S102, S110, S113, S119, and S120. The residue at position 123 (T123) is a Phosphothreonine. Phosphoserine is present on S134. Omega-N-methylarginine is present on residues R137, R142, R144, R160, R167, and R180. 3 positions are modified to phosphoserine: S183, S187, and S203. R205 is subject to Omega-N-methylarginine. The residue at position 275 (T275) is a Phosphothreonine. S279 bears the Phosphoserine mark. 2 disordered regions span residues 291–370 (SLDG…RPIP) and 388–501 (RAVL…QTVP). The residue at position 307 (T307) is a Phosphothreonine. 3 positions are modified to phosphoserine: S315, S331, and S338. T340 bears the Phosphothreonine mark. Low complexity predominate over residues 359–370 (QPRSTPRQRPIP). Residues 400-424 (APPPKLPPQPPPQPQMQPQPQPQPQ) are compositionally biased toward pro residues. Over residues 425–440 (MQPQSQAQPQTPAPQQ) the composition is skewed to low complexity. 3 positions are modified to phosphoserine: S522, S563, and S593. Residues 547 to 614 (FHRHGGPGPG…SVLRKVGSPR (68 aa)) are disordered. Residues 575–597 (PPAPAPPAPIPPPAPPQSSPPEQ) are compositionally biased toward pro residues. ANK repeat units follow at residues 655 to 684 (EGIT…NVNS) and 688 to 717 (HGWT…AIFA). The SH3 domain occupies 754 to 816 (MHNGVVYALW…PRNYFGLFPR (63 aa)).

Belongs to the iASPP family. As to quaternary structure, interacts with TP63 and TP73. Interacts with RELA NF-kappa-B subunit and with SP1 via its C-terminal part. Interacts (via SH3 domain and ANK repeats) with p53/TP53; the interaction inhibits pro-apoptotic activity of p53/TP53. In terms of tissue distribution, most abundant in skin with high levels also found in heart, testis and stomach. In 15.5 dpc embryonic heart, expressed at higher levels in atria than ventricles.

It localises to the cytoplasm. The protein resides in the nucleus. Functionally, regulator that plays a central role in regulation of apoptosis and transcription via its interaction with NF-kappa-B and p53/TP53 proteins. Inhibits p53/TP53 function, possibly by preventing the association between p53/TP53 and ASPP1 or ASPP2, and therefore suppressing the subsequent activation of apoptosis. Is involved in NF-kappa-B dependent negative regulation of inflammatory response. This chain is RelA-associated inhibitor, found in Mus musculus (Mouse).